We begin with the raw amino-acid sequence, 342 residues long: MRIPDFQQRLADIGAKPRHIGRMTRAWLKGLPLDVGRRQQQAEDFLPLSVREGLPALSLEIDALARLRSEHPAADGSARLLVELGDGQMVESVLLPRDGLCVSSQVGCAVGCVFCMTGKSGLLRQLGSAEIVAQVALARRFRPVKKVVFMGMGEPAHNLDNVLEAIDLLGTEGGIGHKNLVFSTVGDLRVFERLPQQRVKPALALSLHSTDGALRQALLPRAPQIAPEELVELGETYARATGFPIQYQWTLLKGINDNQEEMDGILRLLKGKYAVMNLIPYNSLEDDAYQRPEGERIVQIVRYLHSRGVLTKVRNSAGQDIDGGCGQLRARAEHVLGRRRPR.

Glu91 serves as the catalytic Proton acceptor. Positions 94–320 (LLPRDGLCVS…TKVRNSAGQD (227 aa)) constitute a Radical SAM core domain. A disulfide bridge connects residues Cys101 and Cys325. Residues Cys108, Cys112, and Cys115 each contribute to the [4Fe-4S] cluster site. S-adenosyl-L-methionine is bound by residues 153–154 (GE), Ser183, 206–208 (SLH), and Asn282. Residue Cys325 is the S-methylcysteine intermediate of the active site.

Belongs to the radical SAM superfamily. RlmN family. The cofactor is [4Fe-4S] cluster.

It is found in the cytoplasm. The chain is Probable RNA methyltransferase PST_2231 from Stutzerimonas stutzeri (strain A1501) (Pseudomonas stutzeri).